The chain runs to 421 residues: Testin (421 aa).

In terms of domain architecture, PET spans 92-199; the sequence is MILTNPVAAK…GDVKLPCEMD (108 aa). Residues 133–164 are disordered; that stretch reads EKQPVAGSEGAQYRKKQLAKQLPAHDQDPSKC. A compositionally biased stretch (basic and acidic residues) spans 155 to 164; it reads PAHDQDPSKC. LIM zinc-binding domains follow at residues 234 to 297, 299 to 359, and 362 to 421; these read YSCY…CDSE, PRCA…NHAV, and QGCH…KRMS.

It belongs to the prickle / espinas / testin family. As to quaternary structure, interacts via LIM domain 1 with ZYX. Interacts (via LIM domain 3) with ENAH and VASP. Interacts with ALKBH4, talin, actin, alpha-actinin, GRIP1 and PXN. Interacts (via LIM domain 2) with ACTL7A (via N-terminus). Heterodimer with ACTL7A; the heterodimer interacts with ENAH to form a heterotrimer.

Its subcellular location is the cytoplasm. It is found in the cell junction. The protein localises to the focal adhesion. Scaffold protein that may play a role in cell adhesion, cell spreading and in the reorganization of the actin cytoskeleton. Plays a role in the regulation of cell proliferation. May act as a tumor suppressor. The polypeptide is Testin (TES) (Pan troglodytes (Chimpanzee)).